Reading from the N-terminus, the 338-residue chain is Phenylalanine--tRNA ligase alpha subunit (338 aa).

Glu252 is a binding site for Mg(2+).

This sequence belongs to the class-II aminoacyl-tRNA synthetase family. Phe-tRNA synthetase alpha subunit type 1 subfamily. In terms of assembly, tetramer of two alpha and two beta subunits. Requires Mg(2+) as cofactor.

It localises to the cytoplasm. The enzyme catalyses tRNA(Phe) + L-phenylalanine + ATP = L-phenylalanyl-tRNA(Phe) + AMP + diphosphate + H(+). The polypeptide is Phenylalanine--tRNA ligase alpha subunit (Pseudomonas aeruginosa (strain ATCC 15692 / DSM 22644 / CIP 104116 / JCM 14847 / LMG 12228 / 1C / PRS 101 / PAO1)).